The chain runs to 200 residues: Superoxide dismutase [Mn] 1 (200 aa).

Residues His29, His76, Asp158, and His162 each contribute to the Mn(2+) site.

The protein belongs to the iron/manganese superoxide dismutase family. Homodimer or homotetramer. Mn(2+) is required as a cofactor.

The enzyme catalyses 2 superoxide + 2 H(+) = H2O2 + O2. Inhibited by hydrogen peroxide. Is resistant to cyanide and azide inhibition. Destroys superoxide anion radicals which are normally produced within the cells and which are toxic to biological systems. This chain is Superoxide dismutase [Mn] 1 (sod1), found in Halobacterium salinarum (strain ATCC 700922 / JCM 11081 / NRC-1) (Halobacterium halobium).